The following is a 95-amino-acid chain: Acyl carrier protein AcpXL (95 aa).

Residues 4–90 (TATFDKVADI…NLCAKIDELR (87 aa)) enclose the Carrier domain. An O-(pantetheine 4'-phosphoryl)serine modification is found at serine 39.

Post-translationally, 4'-phosphopantetheine is transferred from CoA to a specific serine of apo-ACP by AcpS. This modification is essential for activity because fatty acids are bound in thioester linkage to the sulfhydryl of the prosthetic group.

Its subcellular location is the cytoplasm. It functions in the pathway glycolipid biosynthesis; KDO(2)-lipid A biosynthesis. Its function is as follows. Carrier of the growing fatty acid chain in fatty acid biosynthesis. Is involved in the transfer of long hydroxylated fatty acids to lipid A. The chain is Acyl carrier protein AcpXL (acpXL) from Rhizobium meliloti (strain 1021) (Ensifer meliloti).